The sequence spans 430 residues: Serine hydroxymethyltransferase (430 aa).

(6S)-5,6,7,8-tetrahydrofolate is bound by residues Leu123 and 127–129 (GHL). At Lys232 the chain carries N6-(pyridoxal phosphate)lysine. Glu248 is a (6S)-5,6,7,8-tetrahydrofolate binding site.

The protein belongs to the SHMT family. In terms of assembly, homodimer. The cofactor is pyridoxal 5'-phosphate.

The protein resides in the cytoplasm. It catalyses the reaction (6R)-5,10-methylene-5,6,7,8-tetrahydrofolate + glycine + H2O = (6S)-5,6,7,8-tetrahydrofolate + L-serine. It participates in one-carbon metabolism; tetrahydrofolate interconversion. Its pathway is amino-acid biosynthesis; glycine biosynthesis; glycine from L-serine: step 1/1. Its function is as follows. Catalyzes the reversible interconversion of serine and glycine with tetrahydrofolate (THF) serving as the one-carbon carrier. This reaction serves as the major source of one-carbon groups required for the biosynthesis of purines, thymidylate, methionine, and other important biomolecules. Also exhibits THF-independent aldolase activity toward beta-hydroxyamino acids, producing glycine and aldehydes, via a retro-aldol mechanism. This chain is Serine hydroxymethyltransferase, found in Anaplasma marginale (strain Florida).